Consider the following 142-residue polypeptide: Small heat shock protein IbpB (142 aa).

The region spanning 26–137 (TGESQSFPPY…APQRIAISER (112 aa)) is the sHSP domain.

Belongs to the small heat shock protein (HSP20) family. As to quaternary structure, homodimer. Forms homomultimers of about 100-150 subunits at optimal growth temperatures. Conformation changes to oligomers at high temperatures or high ionic concentrations. The decrease in size of the multimers is accompanied by an increase in chaperone activity.

It localises to the cytoplasm. In terms of biological role, associates with aggregated proteins, together with IbpA, to stabilize and protect them from irreversible denaturation and extensive proteolysis during heat shock and oxidative stress. Aggregated proteins bound to the IbpAB complex are more efficiently refolded and reactivated by the ATP-dependent chaperone systems ClpB and DnaK/DnaJ/GrpE. Its activity is ATP-independent. This Citrobacter koseri (strain ATCC BAA-895 / CDC 4225-83 / SGSC4696) protein is Small heat shock protein IbpB.